Reading from the N-terminus, the 442-residue chain is Probable xylan O-acetyltransferase 8 (442 aa).

The Cytoplasmic portion of the chain corresponds to methionine 1 to arginine 13. A helical; Signal-anchor for type II membrane protein membrane pass occupies residues alanine 14–threonine 34. Over glutamate 35–leucine 442 the chain is Lumenal. Residue asparagine 96 is glycosylated (N-linked (GlcNAc...) asparagine). 4 cysteine pairs are disulfide-bonded: cysteine 100-cysteine 151, cysteine 122-cysteine 187, cysteine 131-cysteine 426, and cysteine 344-cysteine 422. A GDS motif motif is present at residues glycine 174 to serine 176. Residue serine 176 is the Nucleophile of the active site. N-linked (GlcNAc...) asparagine glycosylation is found at asparagine 217, asparagine 346, and asparagine 384. Aspartate 421 (proton donor) is an active-site residue. A DXXH motif motif is present at residues aspartate 421–histidine 424. The active-site Proton acceptor is the histidine 424.

Belongs to the PC-esterase family. TBL subfamily.

Its subcellular location is the golgi apparatus membrane. Its function is as follows. Probable xylan acetyltransferase required for 2-O- and 3-O-monoacetylation of xylosyl residues in xylan. Possesses extremely low activity in vitro. In Oryza sativa subsp. japonica (Rice), this protein is Probable xylan O-acetyltransferase 8.